A 535-amino-acid polypeptide reads, in one-letter code: EH domain-containing protein 3 (535 aa).

Residue M1 is modified to N-acetylmethionine. The Dynamin-type G domain occupies 55–286 (FDNKPMVLLV…DLFRDIQSLP (232 aa)). The tract at residues 65–72 (GQYSTGKT) is G1 motif. ATP is bound at residue 65 to 72 (GQYSTGKT). The tract at residues 91 to 92 (EP) is G2 motif. The interval 153–156 (DTPG) is G3 motif. Residues 198 to 227 (DEFSEVIKALKNHEDKMRVVLNKADQIETQ) are a coiled coil. Residues 219-222 (NKAD) form a G4 motif region. Residue K220 participates in ATP binding. Position 243 (I243) is a region of interest, G5 motif. W258 contacts ATP. Residue K315 forms a Glycyl lysine isopeptide (Lys-Gly) (interchain with G-Cter in SUMO) linkage. Phosphoserine occurs at positions 349 and 456. An EH domain is found at 444–532 (DKPMYDEIFY…AHLLPPSKRK (89 aa)). The region spanning 476 to 511 (LPNSVLGKIWKLADIDKDGMLDDEEFALANHLIKVK) is the EF-hand domain. Ca(2+) contacts are provided by D489, D491, D493, M495, and E500. A Glycyl lysine isopeptide (Lys-Gly) (interchain with G-Cter in SUMO) cross-link involves residue K511.

This sequence belongs to the TRAFAC class dynamin-like GTPase superfamily. Dynamin/Fzo/YdjA family. EHD subfamily. Homooligomer. Heterooligomer with EHD1. Heterooligomer with EHD2 and EHD4; ATP-binding is required for heterooligomerization. Interacts with PACSIN1. Interacts with PACSIN2. Interacts (via EH domain) with MICALL1. Interacts (via EH domain) with RAB11FIP2. Interacts with ANK2. Interacts with CACNA1GG and CACNA1H. Strong expression seen in the kidney, brain and liver. In the kidney, expressed exclusively by glomerular endothelial cells; at protein level. Expressed in skeletal muscle neuromuscular junction perisynaptic region; at protein level.

The protein localises to the recycling endosome membrane. Its subcellular location is the cell membrane. The protein resides in the cell projection. It localises to the cilium membrane. It is found in the cytoplasmic vesicle. Functionally, ATP- and membrane-binding protein that controls membrane reorganization/tubulation upon ATP hydrolysis. In vitro causes tubulation of endocytic membranes. Binding to phosphatidic acid induces its membrane tubulation activity. Plays a role in endocytic transport. Involved in early endosome to recycling endosome compartment (ERC), retrograde early endosome to Golgi, and endosome to plasma membrane (rapid recycling) protein transport. Involved in the regulation of Golgi maintenance and morphology. Involved in the recycling of internalized D1 dopamine receptor. Plays a role in cardiac protein trafficking probably implicating ANK2. Involved in the ventricular membrane targeting of SLC8A1 and CACNA1C and probably the atrial membrane localization of CACNA1GG and CACNA1H implicated in the regulation of atrial myocyte excitability and cardiac conduction. In conjunction with EHD4 may be involved in endocytic trafficking of KDR/VEGFR2 implicated in control of glomerular function. Involved in the rapid recycling of integrin beta-3 implicated in cell adhesion maintenance. Involved in the unidirectional retrograde dendritic transport of endocytosed BACE1 and in efficient sorting of BACE1 to axons implicating a function in neuronal APP processing. Plays a role in the formation of the ciliary vesicle, an early step in cilium biogenesis; possibly sharing redundant functions with Ehd1. The sequence is that of EH domain-containing protein 3 from Mus musculus (Mouse).